The sequence spans 384 residues: Urea transporter 1 (384 aa).

The disordered stretch occupies residues 1-23; sequence MDDNPTAVKLDQGGNQAPQGQGR. Helical transmembrane passes span 61-81, 85-105, 111-131, 138-158, and 169-189; these read ISQVVFVSNPISGILILVGLL, PWCALNGCVGTVVSTLTALLL, AITAGLQGYNATLVGILMAIY, FWWLLFPVSAMSMTCPIFSSA, and PVFTLPFNMALSMYLSATGHF. The N-linked (GlcNAc...) asparagine glycan is linked to Asn206. A run of 3 helical transmembrane segments spans residues 237 to 257, 279 to 299, and 327 to 347; these read GGIFLGAILLSSPLMCLHAAI, GLWGFNSSLACIAIGGMFMAL, and VVGLPSCTWPFCLATLLFLLL.

The protein belongs to the urea transporter family. Homotrimer; each subunit contains a pore through which urea permeates. Identified in a complex with STOM.

It is found in the cell membrane. The protein localises to the basolateral cell membrane. It carries out the reaction urea(in) = urea(out). Mediates the transport of urea driven by a concentration gradient across the cell membranes of erythrocytes and the renal inner medullary collecting duct which is critical to the urinary concentrating mechanism. Facilitates water transport in erythrocytes. This chain is Urea transporter 1 (SLC14A1), found in Ovis aries (Sheep).